The sequence spans 527 residues: ARS-binding protein 2 (527 aa).

Disordered stretches follow at residues 160 to 184, 219 to 265, and 282 to 344; these read PDVN…HSAS, SHHM…NSHN, and IDPD…IKRL. Residues 164 to 177 show a composition bias toward low complexity; sequence SSSISTMRTSTSPS. Residues 225-239 show a composition bias toward polar residues; that stretch reads RGSQQAHQTTPQNHS. The segment covering 284 to 303 has biased composition (basic and acidic residues); sequence PDWHQWPDDLRDVSSPKESD. Ser-297, Ser-298, and Ser-302 each carry phosphoserine. The span at 328–343 shows a compositional bias: basic residues; it reads PRKRGRPPGARNKIKR.

The protein localises to the nucleus. Binds, preferentially, to the Maundrell ARS consensus sequence within ARS3002. The sequence is that of ARS-binding protein 2 (abp2) from Schizosaccharomyces pombe (strain 972 / ATCC 24843) (Fission yeast).